A 278-amino-acid chain; its full sequence is TnpB-like protein MJ0751 (278 aa).

The Zn(2+) site is built by C222, C225, C239, and C242.

The protein in the N-terminal section; belongs to the transposase 2 family. In the C-terminal section; belongs to the transposase 35 family.

This Methanocaldococcus jannaschii (strain ATCC 43067 / DSM 2661 / JAL-1 / JCM 10045 / NBRC 100440) (Methanococcus jannaschii) protein is TnpB-like protein MJ0751.